A 239-amino-acid polypeptide reads, in one-letter code: Increased recombination centers protein 22-1 (239 aa).

Positions 1-19 are cleaved as a signal peptide; that stretch reads MKLSTIFTAFAATIATVAG. The Lumenal segment spans residues 20 to 161; sequence YETTGSKQTV…AAVSFFDPRL (142 aa). Residues 162-182 traverse the membrane as a helical segment; it reads IFLELVLLITFAGLIYVGYEI. Residues 183 to 239 lie on the Cytoplasmic side of the membrane; sequence WGKQYFKGVAPVKAKKVSAAKASSPVASGPSTTSATGYDTNWIPESHLKQKKTKKVN. Positions 201-213 are enriched in low complexity; the sequence is AAKASSPVASGPS. The disordered stretch occupies residues 201 to 222; that stretch reads AAKASSPVASGPSTTSATGYDT.

Belongs to the IRC22 family.

Its subcellular location is the endoplasmic reticulum membrane. In terms of biological role, is probably involved in a pathway contributing to genomic integrity. In Candida albicans (strain SC5314 / ATCC MYA-2876) (Yeast), this protein is Increased recombination centers protein 22-1 (IRC22-1).